The primary structure comprises 345 residues: NADPH-dependent curcumin reductase (345 aa).

The segment covering 1 to 10 has biased composition (basic residues); it reads MGQQKQRNRR. A disordered region spans residues 1-24; the sequence is MGQQKQRNRRWVLASRPHGAPVPE. Residues lysine 186, asparagine 225, and asparagine 333 each coordinate NADP(+).

In terms of assembly, homodimer.

The catalysed reaction is tetrahydrocurcumin + 2 NADP(+) = curcumin + 2 NADPH + 2 H(+). It catalyses the reaction tetrahydrocurcumin + NADP(+) = dihydrocurcumin + NADPH + H(+). It carries out the reaction dihydrocurcumin + NADP(+) = curcumin + NADPH + H(+). With respect to regulation, inhibited by thiol-specific reagents (p-chloromercuribenzoate and 5,5'-dithio-bis-2-nitrobenzoate). In terms of biological role, catalyzes the metal-independent reduction of curcumin to dihydrocurcumin (DHC) as an intermediate product, followed by further reduction to tetrahydrocurcumin (THC) as an end product. It also acts on 3-octene-2-one, 3-hepten-2-one, resveratrol, and trans-2-octenal. This is NADPH-dependent curcumin reductase from Escherichia coli (strain K12).